The following is a 132-amino-acid chain: Small ribosomal subunit protein uS8 (132 aa).

The protein belongs to the universal ribosomal protein uS8 family. Part of the 30S ribosomal subunit. Contacts proteins S5 and S12.

Its function is as follows. One of the primary rRNA binding proteins, it binds directly to 16S rRNA central domain where it helps coordinate assembly of the platform of the 30S subunit. This chain is Small ribosomal subunit protein uS8, found in Paramagnetospirillum magneticum (strain ATCC 700264 / AMB-1) (Magnetospirillum magneticum).